Here is a 1006-residue protein sequence, read N- to C-terminus: E3 ubiquitin-protein ligase MIB1 (1006 aa).

The region spanning 6–74 is the MIB/HERC2 1 domain; the sequence is NNRVMVEGVG…AYDLRILDSA (69 aa). The ZZ-type zinc-finger motif lies at 80–132; sequence HDGTMCDTCRQQPIIGIRWKCAECTNYDLCTVCYHGDKHHLRHRFYRITTPGS. Zn(2+)-binding residues include Cys-85, Cys-88, Cys-100, Cys-103, Cys-109, Cys-112, His-118, and His-122. The region spanning 143-221 is the MIB/HERC2 2 domain; sequence SKKITARGIF…MSDLKCVQDA (79 aa). At Ser-408 the chain carries Phosphoserine. 9 ANK repeats span residues 430-460, 463-492, 496-525, 529-558, 562-591, 595-627, 631-661, 665-694, and 698-729; these read DLNEELVKAAANGDVAKVEDLLKRPDVDVNG, AGHTAMQAASQNGHVDILKLLLKQNVDVEA, DGDRAVHHAAFGDEGAVIEVLHRGSADLNA, RRQTPLHIAVNKGHLQVVKTLLDFGCHPSL, EGDTPLHDAISKKRDDILAVLLEAGADVTI, NGFNALHHAALRGNPSAMRVLLSKLPRPWIVDE, DGYTALHLAALNNHVEVAELLVHQGNANLDI, NQQTALHLAVERQHTQIVRLLVRAGAKLDI, and DGDTPLHEALRHHTLSQLRQLQDMQDVGKVDA. 2 consecutive RING-type zinc fingers follow at residues 819 to 854 and 866 to 901; these read CMVCSDMKRDTLFGPCGHIATCSLCSPRVKKCLICK and CVVCSDKKAAVLFQPCGHMCACENCASLMKKCVQCR. A coiled-coil region spans residues 935–962; the sequence is QKDKDNTNVNADVQKLQQQLQDIKEQTM. An RING-type 3 zinc finger spans residues 963-996; it reads CPVCLDRLKNMIFLCGHGTCQLCGDRMSECPICR.

Interacts with CEP131 and PCM1. Ubiquitinated; this modification is inhibited in response to cellular stress, such as ultraviolet light (UV) radiation or heat shock. Ubiquitinated; possibly via autoubiquitination. In terms of tissue distribution, detected in all tissues tested. Present in embryo, embryonic stem cells, bladder, skeletal muscle, bladder, uterus, testis, stomach, colon, ileum, trachea, lung, aorta, kidney, spleen, liver and vas deferens (at protein level). Highly expressed in testis.

Its subcellular location is the cytoplasm. It is found in the cytoskeleton. It localises to the microtubule organizing center. The protein resides in the centrosome. The protein localises to the centriolar satellite. Its subcellular location is the cell membrane. It catalyses the reaction S-ubiquitinyl-[E2 ubiquitin-conjugating enzyme]-L-cysteine + [acceptor protein]-L-lysine = [E2 ubiquitin-conjugating enzyme]-L-cysteine + N(6)-ubiquitinyl-[acceptor protein]-L-lysine.. It functions in the pathway protein modification; protein ubiquitination. Functionally, E3 ubiquitin-protein ligase that mediates ubiquitination of Delta receptors, which act as ligands of Notch proteins. Positively regulates the Delta-mediated Notch signaling by ubiquitinating the intracellular domain of Delta, leading to endocytosis of Delta receptors. Involved in ubiquitination of centriolar satellite CEP131, CEP290 and PCM1 proteins and hence inhibits primary cilium formation in proliferating cells. Mediates 'Lys-63'-linked polyubiquitination of TBK1, which probably participates in kinase activation. Probably mediates ubiquitination and subsequent proteasomal degradation of DAPK1, thereby antagonizing anti-apoptotic effects of DAPK1 to promote TNF-induced apoptosis. This is E3 ubiquitin-protein ligase MIB1 (Mib1) from Mus musculus (Mouse).